The sequence spans 175 residues: ATP synthase subunit delta (175 aa).

Belongs to the ATPase delta chain family. As to quaternary structure, F-type ATPases have 2 components, F(1) - the catalytic core - and F(0) - the membrane proton channel. F(1) has five subunits: alpha(3), beta(3), gamma(1), delta(1), epsilon(1). F(0) has three main subunits: a(1), b(2) and c(10-14). The alpha and beta chains form an alternating ring which encloses part of the gamma chain. F(1) is attached to F(0) by a central stalk formed by the gamma and epsilon chains, while a peripheral stalk is formed by the delta and b chains.

Its subcellular location is the cell membrane. Its function is as follows. F(1)F(0) ATP synthase produces ATP from ADP in the presence of a proton or sodium gradient. F-type ATPases consist of two structural domains, F(1) containing the extramembraneous catalytic core and F(0) containing the membrane proton channel, linked together by a central stalk and a peripheral stalk. During catalysis, ATP synthesis in the catalytic domain of F(1) is coupled via a rotary mechanism of the central stalk subunits to proton translocation. This protein is part of the stalk that links CF(0) to CF(1). It either transmits conformational changes from CF(0) to CF(1) or is implicated in proton conduction. This is ATP synthase subunit delta from Stenotrophomonas maltophilia (strain K279a).